Here is a 77-residue protein sequence, read N- to C-terminus: uncharacterized protein (77 aa).

4Fe-4S ferredoxin-type domains follow at residues 3 to 32 (VEIIVDREKCIGCGRCYDVCPKGPLIWTKD) and 36 to 65 (KYYAYDVEYCHNCKFCAGRCPTNAILIKVV). Residues cysteine 12, cysteine 15, cysteine 18, cysteine 22, cysteine 45, cysteine 48, cysteine 51, and cysteine 55 each coordinate [4Fe-4S] cluster.

[4Fe-4S] cluster serves as cofactor.

Its function is as follows. Ferredoxins are iron-sulfur proteins that transfer electrons probably in the CO-dehydrogenase complex. This is an uncharacterized protein from Methanocaldococcus jannaschii (strain ATCC 43067 / DSM 2661 / JAL-1 / JCM 10045 / NBRC 100440) (Methanococcus jannaschii).